The chain runs to 1092 residues: Fibrinogen-binding protein (1092 aa).

A signal peptide spans 1-51 (MINKKNNLLTKKKPIANKSNKYAIRKFTVGTASIVIGATLLFGLGHNEAKA). Positions 50-63 (KAEENSVQDVKDSN) are enriched in basic and acidic residues. The tract at residues 50-236 (KAEENSVQDV…GYTNIDEKIS (187 aa)) is disordered. The segment at 52 to 599 (EENSVQDVKD…GQGQGDLPPE (548 aa)) is ligand binding A region. Positions 64–76 (TDDELSDSNDQSS) are enriched in acidic residues. Positions 84-98 (INNNQSINTDDNNQI) are enriched in low complexity. The span at 99 to 119 (IKKEETNNYDGIEKRSEDRTE) shows a compositional bias: basic and acidic residues. Residues 120 to 140 (STTNVDENEATFLQKTPQDNT) show a composition bias toward polar residues. The span at 141–151 (HLTEEEVKESS) shows a compositional bias: basic and acidic residues. Positions 160 to 170 (IDTAQQPSHTT) are enriched in polar residues. Residues 195-220 (KIKESNTESGKEENTIEQPNKVKEDS) show a composition bias toward basic and acidic residues. The Ca(2+) site is built by E294, S299, V302, and E309. The tract at residues 579–590 (YDNTIAFSTSSG) is interaction with human fibrinogen. CNA-B domains follow at residues 600 to 713 (KTYK…YQTP) and 714 to 824 (KYSL…YDDE). Residues 780-1068 (KPSGMTQTTT…NEDYGSKGTL (289 aa)) form a disordered region. The segment covering 791 to 801 (SGDDDEQDADG) has biased composition (acidic residues). The segment covering 802–814 (EEVHVTITDHDDF) has biased composition (basic and acidic residues). The segment covering 820-1039 (YYDDESDSDS…DSDSDSDNDS (220 aa)) has biased composition (acidic residues). The short motif at 1053-1057 (LPDTG) is the LPXTG sorting signal element. T1056 is subject to Pentaglycyl murein peptidoglycan amidated threonine. Positions 1057 to 1092 (GANEDYGSKGTLLGTLFAGLGALLLGKRRKNRKNKN) are cleaved as a propeptide — removed by sortase.

The protein belongs to the serine-aspartate repeat-containing protein (SDr) family.

The protein localises to the secreted. Its subcellular location is the cell wall. Functionally, promotes bacterial attachment to both soluble and immobilized forms of fibrinogen in a dose-dependent manner. This binding occurs through the beta-chain of human fibrinogen. Could contribute to the initiation of foreign-body infection by allowing bacteria to adhere to biomaterial surfaces that have become coated with host proteins after implantation. Is important in the pathogenesis of central venous catheter (CVC)-associated infection model. In Staphylococcus epidermidis, this protein is Fibrinogen-binding protein (fbe).